A 380-amino-acid chain; its full sequence is 3-dehydroquinate synthase (380 aa).

Residues 118–122 (GVIGD), 142–143 (TS), lysine 155, and lysine 164 each bind NAD(+). 3 residues coordinate Zn(2+): glutamate 197, histidine 259, and histidine 278.

Belongs to the sugar phosphate cyclases superfamily. Dehydroquinate synthase family. Requires Co(2+) as cofactor. It depends on Zn(2+) as a cofactor. NAD(+) serves as cofactor.

The protein resides in the cytoplasm. The enzyme catalyses 7-phospho-2-dehydro-3-deoxy-D-arabino-heptonate = 3-dehydroquinate + phosphate. Its pathway is metabolic intermediate biosynthesis; chorismate biosynthesis; chorismate from D-erythrose 4-phosphate and phosphoenolpyruvate: step 2/7. Catalyzes the conversion of 3-deoxy-D-arabino-heptulosonate 7-phosphate (DAHP) to dehydroquinate (DHQ). This chain is 3-dehydroquinate synthase, found in Sinorhizobium medicae (strain WSM419) (Ensifer medicae).